A 288-amino-acid polypeptide reads, in one-letter code: 11-beta-hydroxysteroid dehydrogenase 1 (288 aa).

At 1–4 (MKKY) the chain is on the cytoplasmic side. Residues 5-20 (LLPVLVLCLGYYYSTN) traverse the membrane as a helical; Signal-anchor for type II membrane protein segment. The Lumenal segment spans residues 21 to 288 (EEFRPEMLQG…SYNRDLFVSN (268 aa)). Residues 37–63 (GASK…TARS), 88–89 (TM), and 115–117 (NHI) each bind NADP(+). Residue N158 is glycosylated (N-linked (GlcNAc...) asparagine). A substrate-binding site is contributed by S166. Y179 acts as the Proton acceptor in catalysis. 179–183 (YSASK) is an NADP(+) binding site. Residue N203 is glycosylated (N-linked (GlcNAc...) asparagine). NADP(+) is bound by residues 212–218 (GFIDTET) and 214–218 (IDTET).

Belongs to the short-chain dehydrogenases/reductases (SDR) family. Homodimer. Post-translationally, glycosylated. Liver, kidney, lung and testis. Brain. Expressed in liver (at protein level).

The protein resides in the endoplasmic reticulum membrane. The enzyme catalyses an 11beta-hydroxysteroid + NADP(+) = an 11-oxosteroid + NADPH + H(+). It catalyses the reaction corticosterone + NADP(+) = 11-dehydrocorticosterone + NADPH + H(+). It carries out the reaction a 7beta-hydroxysteroid + NADP(+) = a 7-oxosteroid + NADPH + H(+). The catalysed reaction is 7-oxocholesterol + NADPH + H(+) = 7beta-hydroxycholesterol + NADP(+). The enzyme catalyses chenodeoxycholate + NADP(+) = 7-oxolithocholate + NADPH + H(+). It catalyses the reaction 7-oxolithocholate + NADPH + H(+) = ursodeoxycholate + NADP(+). It carries out the reaction glycochenodeoxycholate + NADP(+) = 7-oxoglycolithocholate + NADPH + H(+). The catalysed reaction is taurochenodeoxycholate + NADP(+) = 7-oxotaurolithocholate + NADPH + H(+). The enzyme catalyses tauroursodeoxycholate + NADP(+) = 7-oxotaurolithocholate + NADPH + H(+). It catalyses the reaction glycoursodeoxycholate + NADP(+) = 7-oxoglycolithocholate + NADPH + H(+). It carries out the reaction 7-oxopregnenolone + NADPH + H(+) = 7beta-hydroxypregnenolone + NADP(+). The catalysed reaction is 3beta,7alpha-dihydroxyandrost-5-en-17-one + NADP(+) = 3beta-hydroxy-5-androstene-7,17-dione + NADPH + H(+). The enzyme catalyses 3beta-hydroxy-5-androstene-7,17-dione + NADPH + H(+) = 3beta,7beta-dihydroxyandrost-5-en-17-one + NADP(+). It catalyses the reaction 3beta-hydroxy-5alpha-androstane-7,17-dione + NADPH + H(+) = 3beta,7beta-dihydroxy-5alpha-androstan-17-one + NADP(+). Its function is as follows. Controls the reversible conversion of biologically active glucocorticoids such as 11-dehydrocorticosterone to corticosterone using NADP(H). Participates in the corticosteroid receptor-mediated anti-inflammatory response, as well as metabolic and homeostatic processes. Bidirectional in vitro, predominantly functions as a reductase in vivo, thereby increasing the concentration of active glucocorticoids. It has broad substrate specificity, besides glucocorticoids, it accepts other steroid and sterol substrates. Interconverts 7-oxo- and 7-hydroxy-neurosteroids such as 7-oxopregnenolone and 7beta-hydroxypregnenolone, 7-oxodehydroepiandrosterone (3beta-hydroxy-5-androstene-7,17-dione) and 7beta-hydroxydehydroepiandrosterone (3beta,7beta-dihydroxyandrost-5-en-17-one), among others. Catalyzes the stereo-specific conversion of the major dietary oxysterol, 7-ketocholesterol (7-oxocholesterol), into the more polar 7-beta-hydroxycholesterol metabolite. 7-oxocholesterol is one of the most important oxysterols, it participates in several events such as induction of apoptosis, accumulation in atherosclerotic lesions, lipid peroxidation, and induction of foam cell formation. Mediates the 7-oxo reduction of 7-oxolithocholate mainly to chenodeoxycholate, and to a lesser extent to ursodeoxycholate, both in its free form and when conjugated to glycine or taurine, providing a link between glucocorticoid activation and bile acid metabolism. Catalyzes the synthesis of 7-beta-25-dihydroxycholesterol from 7-oxo-25-hydroxycholesterol in vitro, which acts as a ligand for the G-protein-coupled receptor (GPCR) Epstein-Barr virus-induced gene 2 (EBI2) and may thereby regulate immune cell migration. In Rattus norvegicus (Rat), this protein is 11-beta-hydroxysteroid dehydrogenase 1.